Consider the following 275-residue polypeptide: Ceramide synthase (275 aa).

In terms of domain architecture, TLC spans 34–261 (ADAVIVSARL…ICRGACRLFR (228 aa)). 4 helical membrane passes run 130–150 (FLMVLHHAAMVLVCFPLSVVW), 159–179 (LGCMLMAEVSTPFVCLGKILI), 194–214 (ALMLLSFLCCRVLLFPYLYWA), and 232–252 (AHVNLGAALLLAPQLYWFFLI).

As to expression, each isoform has a distinct expression pattern. Isoform 1 is highly expressed in brain. Isoform 2 is expressed at low levels, if any, in all analyzed tissues, with slightly higher levels in testis. Isoform 3 is expressed at very high levels in testis and, at lower levels, in white adipose tissue. In epididymal fat, isoform 3 is expressed at higher levels in obese mice compared with lean mice. By contrast, isoform 1 and 2 levels are significantly lower in obese mice compared with lean mice.

Its subcellular location is the golgi apparatus membrane. It is found in the endoplasmic reticulum membrane. The enzyme catalyses sphing-4-enine + octadecanoyl-CoA = N-octadecanoylsphing-4-enine + CoA + H(+). It carries out the reaction eicosanoyl-CoA + sphing-4-enine = N-eicosanoyl-sphing-4-enine + CoA + H(+). The catalysed reaction is sphing-4-enine + hexadecanoyl-CoA = N-hexadecanoylsphing-4-enine + CoA + H(+). Involved in ceramide synthesis. In vitro, isoform 3 stimulates the production of C16-, C18- and C20-ceramides, isoform 1 slightly increases the levels of C18- and C20-ceramides, while isoform 2 exhibits only minimal activity. May interfere with adipogenesis by stimulating ceramide synthesis. The sequence is that of Ceramide synthase (Tlcd3b) from Mus musculus (Mouse).